A 419-amino-acid polypeptide reads, in one-letter code: L-rhamnose isomerase (419 aa).

Mn(2+)-binding residues include His262, Asp294, and Asp296.

Belongs to the rhamnose isomerase family. As to quaternary structure, homotetramer. The cofactor is Mn(2+).

The protein localises to the cytoplasm. The catalysed reaction is L-rhamnopyranose = L-rhamnulose. It functions in the pathway carbohydrate degradation; L-rhamnose degradation; glycerone phosphate from L-rhamnose: step 1/3. Its function is as follows. Catalyzes the interconversion of L-rhamnose and L-rhamnulose. In Shigella flexneri, this protein is L-rhamnose isomerase.